A 396-amino-acid chain; its full sequence is Elongation factor Tu (396 aa).

The region spanning Lys10–Thr206 is the tr-type G domain. The tract at residues Gly19–Thr26 is G1. Residue Gly19 to Thr26 coordinates GTP. Residue Thr26 coordinates Mg(2+). The tract at residues Gly60–Ser64 is G2. The segment at Asp81–Gly84 is G3. GTP-binding positions include Asp81–His85 and Asn136–Asp139. The interval Asn136–Asp139 is G4. A G5 region spans residues Ser174 to Leu176.

This sequence belongs to the TRAFAC class translation factor GTPase superfamily. Classic translation factor GTPase family. EF-Tu/EF-1A subfamily. In terms of assembly, monomer.

The protein localises to the cytoplasm. The enzyme catalyses GTP + H2O = GDP + phosphate + H(+). Its function is as follows. GTP hydrolase that promotes the GTP-dependent binding of aminoacyl-tRNA to the A-site of ribosomes during protein biosynthesis. The polypeptide is Elongation factor Tu (Pelagibacter ubique (strain HTCC1062)).